Reading from the N-terminus, the 98-residue chain is Cystatin-A (98 aa).

At Met-1 the chain carries N-acetylmethionine. The Secondary area of contact signature appears at 46 to 50; it reads QVVAG.

It belongs to the cystatin family. As to expression, expressed in the skin throughout the epidermis.

The protein resides in the cytoplasm. In terms of biological role, this is an intracellular thiol proteinase inhibitor. Has an important role in desmosome-mediated cell-cell adhesion in the lower levels of the epidermis. This Homo sapiens (Human) protein is Cystatin-A (CSTA).